The sequence spans 31 residues: Cycloviolacin-O14 (31 aa).

A cross-link (cyclopeptide (Gly-Asn)) is located at residues 1–31 (GSIPACGESCFKGKCYTPGCSCSKYPLCAKN). 3 disulfide bridges follow: Cys-6-Cys-20, Cys-10-Cys-22, and Cys-15-Cys-28.

Post-translationally, this is a cyclic peptide. Expressed in leaves and petioles but not in petals, roots and runners (at protein level).

Its function is as follows. Probably participates in a plant defense mechanism. Has hemolytic activity. This Viola odorata (Sweet violet) protein is Cycloviolacin-O14.